Consider the following 113-residue polypeptide: uncharacterized protein (113 aa).

The interval 31 to 113 (SNNNNNNNNN…YSPTKFNLQY (83 aa)) is disordered. A compositionally biased stretch (low complexity) spans 32–98 (NNNNNNNNNN…NNNNNNNNNN (67 aa)). Polar residues predominate over residues 99 to 113 (SSSFEYSPTKFNLQY).

This is an uncharacterized protein from Dictyostelium discoideum (Social amoeba).